The following is a 604-amino-acid chain: Prostaglandin G/H synthase 2 (604 aa).

The signal sequence occupies residues 1–17 (MLFRAVLLCAALGLSQA). Positions 18–55 (ANPCCSNPCQNRGECMSTGFDQYKCDCTRTGFYGENCT) constitute an EGF-like domain. 4 disulfide bridges follow: Cys21-Cys32, Cys22-Cys145, Cys26-Cys42, and Cys44-Cys54. The N-linked (GlcNAc...) asparagine glycan is linked to Asn53. Arg106 lines the substrate pocket. Asn130 carries an N-linked (GlcNAc...) asparagine glycan. His193 serves as the catalytic Proton acceptor. Tyr341 contacts substrate. The For cyclooxygenase activity role is filled by Tyr371. His374 provides a ligand contact to heme b. The N-linked (GlcNAc...) asparagine glycan is linked to Asn396. At Cys526 the chain carries S-nitrosocysteine. An intrachain disulfide couples Cys555 to Cys561. Ser565 is subject to O-acetylserine; by SPHK1. Residue Asn580 is glycosylated (N-linked (GlcNAc...) asparagine).

This sequence belongs to the prostaglandin G/H synthase family. In terms of assembly, homodimer. The cofactor is heme b. S-nitrosylation by NOS2 (iNOS) activates enzyme activity. S-nitrosylation may take place on different Cys residues in addition to Cys-526. In terms of processing, acetylated at Ser-565 by SPHK1. During neuroinflammation, acetylation by SPHK1 promotes neuronal secretion of specialized preresolving mediators (SPMs), especially 15-R-lipoxin A4, which results in an increase of phagocytic microglia. As to expression, following colon injury, expressed in the wound bed mesenchyme during the first phase of repair, probably by colonic mesenchymal stem cells (at protein level).

The protein localises to the microsome membrane. Its subcellular location is the endoplasmic reticulum membrane. The protein resides in the nucleus inner membrane. It is found in the nucleus outer membrane. It catalyses the reaction (5Z,8Z,11Z,14Z)-eicosatetraenoate + AH2 + 2 O2 = prostaglandin H2 + A + H2O. The enzyme catalyses (5Z,8Z,11Z,14Z)-eicosatetraenoate + 2 O2 = prostaglandin G2. It carries out the reaction prostaglandin G2 + AH2 = prostaglandin H2 + A + H2O. The catalysed reaction is (5Z,8Z,11Z,14Z,17Z)-eicosapentaenoate + 2 O2 = prostaglandin G3. It catalyses the reaction prostaglandin G3 + AH2 = prostaglandin H3 + A + H2O. The enzyme catalyses (8Z,11Z,14Z)-eicosatrienoate + 2 O2 = prostaglandin G1. It carries out the reaction prostaglandin G1 + AH2 = prostaglandin H1 + A + H2O. The catalysed reaction is 2-(5Z,8Z,11Z,14Z)-eicosatetraenoyl-sn-glycero-3-phosphoethanolamine + 2 O2 = 2-(prostaglandin G2)-sn-glycero-3-phosphoethanolamine. It catalyses the reaction 2-(prostaglandin G2)-sn-glycero-3-phosphoethanolamine + AH2 = 2-(prostaglandin H2)-sn-glycero-3-phosphoethanolamine + A + H2O. The enzyme catalyses 2-(5Z,8Z,11Z,14Z)-eicosatetraenoyl-sn-glycero-3-phosphocholine + 2 O2 = 2-(prostaglandin G2)-sn-glycero-3-phosphocholine. It carries out the reaction 2-(prostaglandin G2)-sn-glycero-3-phosphocholine + AH2 = 2-(prostaglandin H2)-sn-glycero-3-phosphocholine + A + H2O. The catalysed reaction is (15S)-hydroperoxy-(5Z,8Z,11Z,13E)-eicosatetraenoate + AH2 = (15S)-hydroxy-(5Z,8Z,11Z,13E)-eicosatetraenoate + A + H2O. It catalyses the reaction 2-(5Z,8Z,11Z,14Z)-eicosatetraenoyl-sn-glycero-3-phosphocholine + AH2 + O2 = 2-[(15S)-hydroxy-(5Z,8Z,11Z,13E)-eicosatetraenoyl]-sn-glycero-3-phosphocholine + A + H2O. The enzyme catalyses 2-(5Z,8Z,11Z,14Z)-eicosatetraenoyl-sn-glycero-3-phosphocholine + AH2 + O2 = 2-[(15R)-hydroxy-(5Z,8Z,11Z,13E)-eicosatetraenoyl]-sn-glycero-3-phosphocholine + A + H2O. It carries out the reaction 2-(5Z,8Z,11Z,14Z)-eicosatetraenoyl-sn-glycero-3-phosphocholine + AH2 + O2 = 2-[(11R)-hydroxy-(5Z,8Z,12E,14Z)-eicosatetraenoyl]-sn-glycero-3-phosphocholine + A + H2O. The catalysed reaction is (9Z,12Z)-octadecadienoate + AH2 + O2 = 9-hydroxy-(10E,12Z)-octadecadienoate + A + H2O. It catalyses the reaction (9Z,12Z)-octadecadienoate + AH2 + O2 = 13-hydroxy-(9Z,11E)-octadecadienoate + A + H2O. The enzyme catalyses (5Z,8Z,11Z,14Z)-eicosatetraenoate + AH2 + O2 = (15R)-hydroxy-(5Z,8Z,11Z,13E)-eicosatetraenoate + A + H2O. It carries out the reaction (5Z,8Z,11Z,14Z)-eicosatetraenoate + AH2 + O2 = (11R)-hydroxy-(5Z,8Z,12E,14Z)-eicosatetraenoate + A + H2O. The catalysed reaction is (5Z,8Z,11Z,14Z,17Z)-eicosapentaenoate + AH2 + O2 = (11R)-hydroxy-(5Z,8Z,12E,14Z,17Z)-eicosapentaenoate + A + H2O. It catalyses the reaction (5Z,8Z,11Z,14Z,17Z)-eicosapentaenoate + AH2 + O2 = (18S)-hydroxy-(5Z,8Z,11Z,14Z,16E)-eicosapentaenoate + A + H2O. The enzyme catalyses (5Z,8Z,11Z,14Z,17Z)-eicosapentaenoate + AH2 + O2 = (18R)-hydroxy-(5Z,8Z,11Z,14Z,16E)-eicosapentaenoate + A + H2O. It carries out the reaction (5Z,8Z,11Z,14Z,17Z)-eicosapentaenoate + AH2 + O2 = (15R)-hydroxy-(5Z,8Z,11Z,13E,17Z)-eicosapentaenoate + A + H2O. The catalysed reaction is (5Z,8Z,11Z,14Z,17Z)-eicosapentaenoate + AH2 + O2 = (15S)-hydroxy-(5Z,8Z,11Z,13E,17Z)-eicosapentaenoate + A + H2O. It catalyses the reaction (7Z,10Z,13Z,16Z,19Z)-docosapentaenoate + AH2 + O2 = 13R-hydroxy-(7Z,10Z,14E,16Z,19Z)-docosapentaenoate + A + H2O. The enzyme catalyses (4Z,7Z,10Z,13Z,16Z,19Z)-docosahexaenoate + AH2 + O2 = 13-hydroxy-(4Z,7Z,10Z,14E,16Z,19Z)-docosahexaenoate + A + H2O. It carries out the reaction (5S)-hydroxy-(6E,8Z,11Z,14Z)-eicosatetraenoate + AH2 + O2 = (5S,15R)-dihydroxy-(6E,8Z,11Z,13E)-eicosatetraenoate + A + H2O. The catalysed reaction is (4Z,7Z,10Z,13Z,16Z,19Z)-docosahexaenoate + AH2 + O2 = 17R-hydroxy-(4Z,7Z,10Z,13Z,15E,19Z)-docosahexaenoate + A + H2O. It catalyses the reaction (5S)-hydroxy-(6E,8Z,11Z,14Z)-eicosatetraenoate + AH2 + O2 = (5S,15S)-dihydroxy-(6E,8Z,11Z,13E)-eicosatetraenoate + A + H2O. The enzyme catalyses (5S)-hydroxy-(6E,8Z,11Z,14Z)-eicosatetraenoate + AH2 + O2 = (5S,11R)-dihydroxy-(6E,8Z,12E,14Z)-eicosatetraenoate + A + H2O. It carries out the reaction 2-(5Z,8Z,11Z,14Z-eicosatetraenoyl)-glycerol + 2 O2 = 2-glyceryl-prostaglandin G2. The catalysed reaction is 2-glyceryl-prostaglandin G2 + AH2 = 2-glyceryl-prostaglandin H2 + A + H2O. It catalyses the reaction (5Z,8Z,11Z,14Z)-eicosatetraenoate + O2 = (15R)-hydroperoxy-(5Z,8Z,11Z,13E)-eicosatetraenoate. The enzyme catalyses (5Z,8Z,11Z,14Z)-eicosatetraenoate + O2 = 11R-hydroperoxy-(5Z,8Z,12E,14Z)-eicosatetraenoate. It carries out the reaction (9Z,12Z)-octadecadienoate + AH2 + O2 = (9R)-hydroxy-(10E,12Z)-octadecadienoate + A + H2O. The catalysed reaction is (9Z,12Z)-octadecadienoate + AH2 + O2 = (9S)-hydroxy-(10E,12Z)-octadecadienoate + A + H2O. It catalyses the reaction (9Z,12Z)-octadecadienoate + AH2 + O2 = (13S)-hydroxy-(9Z,11E)-octadecadienoate + A + H2O. The enzyme catalyses (9Z,12Z)-octadecadienoate + AH2 + O2 = (13R)-hydroxy-(9Z,11E)-octadecadienoate + A + H2O. Its pathway is lipid metabolism; prostaglandin biosynthesis. Its activity is regulated as follows. Inhibited by the nonsteroidal anti-inflammatory drugs aspirin, naproxen, diclofenac, meclofenamic acid, indomethacin and their analogs. Dual cyclooxygenase and peroxidase in the biosynthesis pathway of prostanoids, a class of C20 oxylipins mainly derived from arachidonate, with a particular role in the inflammatory response. The cyclooxygenase activity oxygenates arachidonate (AA, C20:4(n-6)) to the hydroperoxy endoperoxide prostaglandin G2 (PGG2), and the peroxidase activity reduces PGG2 to the hydroxy endoperoxide PGH2, the precursor of all 2-series prostaglandins and thromboxanes. This complex transformation is initiated by abstraction of hydrogen at carbon 13 (with S-stereochemistry), followed by insertion of molecular O2 to form the endoperoxide bridge between carbon 9 and 11 that defines prostaglandins. The insertion of a second molecule of O2 (bis-oxygenase activity) yields a hydroperoxy group in PGG2 that is then reduced to PGH2 by two electrons. Similarly catalyzes successive cyclooxygenation and peroxidation of dihomo-gamma-linoleate (DGLA, C20:3(n-6)) and eicosapentaenoate (EPA, C20:5(n-3)) to corresponding PGH1 and PGH3, the precursors of 1- and 3-series prostaglandins. In an alternative pathway of prostanoid biosynthesis, converts 2-arachidonoyl lysophopholipids to prostanoid lysophopholipids, which are then hydrolyzed by intracellular phospholipases to release free prostanoids. Metabolizes 2-arachidonoyl glycerol yielding the glyceryl ester of PGH2, a process that can contribute to pain response. Generates lipid mediators from n-3 and n-6 polyunsaturated fatty acids (PUFAs) via a lipoxygenase-type mechanism. Oxygenates PUFAs to hydroperoxy compounds and then reduces them to corresponding alcohols. Plays a role in the generation of resolution phase interaction products (resolvins) during both sterile and infectious inflammation. Metabolizes docosahexaenoate (DHA, C22:6(n-3)) to 17R-HDHA, a precursor of the D-series resolvins (RvDs). As a component of the biosynthetic pathway of E-series resolvins (RvEs), converts eicosapentaenoate (EPA, C20:5(n-3)) primarily to 18S-HEPE that is further metabolized by ALOX5 and LTA4H to generate 18S-RvE1 and 18S-RvE2. In vascular endothelial cells, converts docosapentaenoate (DPA, C22:5(n-3)) to 13R-HDPA, a precursor for 13-series resolvins (RvTs) shown to activate macrophage phagocytosis during bacterial infection. In activated leukocytes, contributes to oxygenation of hydroxyeicosatetraenoates (HETE) to diHETES (5,15-diHETE and 5,11-diHETE). Can also use linoleate (LA, (9Z,12Z)-octadecadienoate, C18:2(n-6)) as substrate and produce hydroxyoctadecadienoates (HODEs) in a regio- and stereospecific manner, being (9R)-HODE ((9R)-hydroxy-(10E,12Z)-octadecadienoate) and (13S)-HODE ((13S)-hydroxy-(9Z,11E)-octadecadienoate) its major products. During neuroinflammation, plays a role in neuronal secretion of specialized preresolving mediators (SPMs) 15R-lipoxin A4 that regulates phagocytic microglia. The chain is Prostaglandin G/H synthase 2 from Mus musculus (Mouse).